We begin with the raw amino-acid sequence, 76 residues long: ATP synthase subunit 9, mitochondrial (76 aa).

At Met-1 the chain carries N-formylmethionine. A run of 2 helical transmembrane segments spans residues 14–34 and 52–72; these read ISTIGLLGAGIGIAIVFAALI and ILGFALSEATGLFCLMVSFLL.

Belongs to the ATPase C chain family. F-type ATPases have 2 components, CF(1) - the catalytic core - and CF(0) - the membrane proton channel. In yeast, the dimeric form of ATP synthase consists of 18 polypeptides: alpha, beta, gamma, delta, epsilon, 4 (B), 5 (OSCP), 6 (A), 8, 9 (C), d, E (Tim11), f, g, h, i, j and k.

Its subcellular location is the mitochondrion membrane. Mitochondrial membrane ATP synthase (F(1)F(0) ATP synthase or Complex V) produces ATP from ADP in the presence of a proton gradient across the membrane which is generated by electron transport complexes of the respiratory chain. F-type ATPases consist of two structural domains, F(1) - containing the extramembraneous catalytic core and F(0) - containing the membrane proton channel, linked together by a central stalk and a peripheral stalk. During catalysis, ATP synthesis in the catalytic domain of F(1) is coupled via a rotary mechanism of the central stalk subunits to proton translocation. Part of the complex F(0) domain. A homomeric c-ring of probably 10 subunits is part of the complex rotary element. This chain is ATP synthase subunit 9, mitochondrial (ATP9), found in Saccharomyces paradoxus (Yeast).